The sequence spans 418 residues: Tyrosine--tRNA ligase 1 (418 aa).

Position 34 (Tyr-34) interacts with L-tyrosine. Positions Pro-39–His-48 match the 'HIGH' region motif. L-tyrosine-binding residues include Tyr-169 and Gln-173. The 'KMSKS' region signature appears at Lys-230–Thr-234. Lys-233 contacts ATP. The S4 RNA-binding domain maps to Thr-352–Tyr-418.

This sequence belongs to the class-I aminoacyl-tRNA synthetase family. TyrS type 1 subfamily. As to quaternary structure, homodimer.

The protein localises to the cytoplasm. The enzyme catalyses tRNA(Tyr) + L-tyrosine + ATP = L-tyrosyl-tRNA(Tyr) + AMP + diphosphate + H(+). Its function is as follows. Catalyzes the attachment of tyrosine to tRNA(Tyr) in a two-step reaction: tyrosine is first activated by ATP to form Tyr-AMP and then transferred to the acceptor end of tRNA(Tyr). The polypeptide is Tyrosine--tRNA ligase 1 (Bacillus anthracis).